The sequence spans 502 residues: MAPLKLNNKNLSQIAAAGETQVKVPTYKRGGDVKEGIVHVGVGGFHRAHLAVYVDQLMQKHGVTDYAICGVGLQPFDAAMRDALGSQDHLYTVIERSAKGSFAHVVGSINSYLFAPDNREAVIAKMAHPDTHIVSLTITESGYYYNENTHELQSEHPDIQFDLQPANEKSPRTTFGFLYAALARRYQQGLKPFTVMSCDNMQKNGSITRHMLESFARLRNPEIAKWIAEQGAFPNAMVDRITPQTSATDKTALADNFAIEDSWPVVTEPFMQWVIEDQFSDGRPPFEKVGAQVVKNVHDVEEFEKHKLRLLNGSHSAIGYPGQLAGFKYVHEVMENPLFSKFVWQMMQDEVKPLLPEIPGVNIDEYCKTLIERFSNPTIMDQLPRICLNASGKIPQFIMPSIAEAIWVTGPFRRLCFVAAAWFHYINGVDDSGKKFEVDDPMREELQAKARAGGTSPAELLSIKSLFGDDLRGDKRFLQEITKAMEDIARDGILKTLPKYID.

37–48 (IVHVGVGGFHRA) serves as a coordination point for NAD(+).

Belongs to the mannitol dehydrogenase family. Monomer.

It carries out the reaction D-mannitol + NAD(+) = D-fructose + NADH + H(+). Functionally, catalyzes the NAD(H)-dependent interconversion of D-fructose and D-mannitol in the mannitol metabolic pathway. The chain is Mannitol 2-dehydrogenase from Aspergillus oryzae (strain ATCC 42149 / RIB 40) (Yellow koji mold).